A 292-amino-acid polypeptide reads, in one-letter code: 4-hydroxy-tetrahydrodipicolinate synthase (292 aa).

A pyruvate-binding site is contributed by T44. Y132 serves as the catalytic Proton donor/acceptor. The active-site Schiff-base intermediate with substrate is K161. Position 203 (I203) interacts with pyruvate.

This sequence belongs to the DapA family. In terms of assembly, homotetramer; dimer of dimers.

The protein resides in the cytoplasm. The catalysed reaction is L-aspartate 4-semialdehyde + pyruvate = (2S,4S)-4-hydroxy-2,3,4,5-tetrahydrodipicolinate + H2O + H(+). The protein operates within amino-acid biosynthesis; L-lysine biosynthesis via DAP pathway; (S)-tetrahydrodipicolinate from L-aspartate: step 3/4. Its function is as follows. Catalyzes the condensation of (S)-aspartate-beta-semialdehyde [(S)-ASA] and pyruvate to 4-hydroxy-tetrahydrodipicolinate (HTPA). The sequence is that of 4-hydroxy-tetrahydrodipicolinate synthase from Fervidobacterium nodosum (strain ATCC 35602 / DSM 5306 / Rt17-B1).